The primary structure comprises 312 residues: tRNA dimethylallyltransferase (312 aa).

An ATP-binding site is contributed by Gly14–Ser21. Position 16-21 (Thr16–Ser21) interacts with substrate. Interaction with substrate tRNA stretches follow at residues Asp39 to Leu42 and Gln163 to Arg167.

The protein belongs to the IPP transferase family. In terms of assembly, monomer. Requires Mg(2+) as cofactor.

It catalyses the reaction adenosine(37) in tRNA + dimethylallyl diphosphate = N(6)-dimethylallyladenosine(37) in tRNA + diphosphate. In terms of biological role, catalyzes the transfer of a dimethylallyl group onto the adenine at position 37 in tRNAs that read codons beginning with uridine, leading to the formation of N6-(dimethylallyl)adenosine (i(6)A). This Methylococcus capsulatus (strain ATCC 33009 / NCIMB 11132 / Bath) protein is tRNA dimethylallyltransferase.